The sequence spans 591 residues: Protein phosphatase EYA1 (591 aa).

3 disordered regions span residues Met-1–His-95, Gly-150–Phe-169, and Met-239–Asp-319. Over residues Ser-8–Pro-23 the composition is skewed to low complexity. Polar residues predominate over residues Ser-28–Ala-53. Positions Ala-56–Ser-75 are enriched in low complexity. Pro residues predominate over residues Pro-78 to Ile-87. Positions Thr-240–Asn-252 are enriched in low complexity. Positions Ala-253 to Ile-286 are enriched in polar residues. Basic and acidic residues predominate over residues Lys-287 to Ser-302. The Nucleophile role is filled by Asp-327. Residues Asp-327, Asp-329, and Asp-555 each coordinate Mg(2+). Residue Asp-329 is the Proton donor of the active site.

It belongs to the HAD-like hydrolase superfamily. EYA family. In terms of assembly, probably interacts with SIX2, SIX4 and SIX5. Interacts with H2AX in response to DNA damage. Interacts with SIX3; promotes EYA1 translocation to the nucleus. It depends on Mg(2+) as a cofactor. In terms of processing, sumoylated with SUMO1. In terms of tissue distribution, extensively expressed in cranial placodes, branchial arches, CNS and developing eye and nose.

The protein resides in the cytoplasm. It localises to the nucleus. The enzyme catalyses O-phospho-L-tyrosyl-[protein] + H2O = L-tyrosyl-[protein] + phosphate. The catalysed reaction is O-phospho-L-seryl-[protein] + H2O = L-seryl-[protein] + phosphate. It catalyses the reaction O-phospho-L-threonyl-[protein] + H2O = L-threonyl-[protein] + phosphate. Functionally, functions both as protein phosphatase and as transcriptional coactivator for SIX1, and probably also for SIX2, SIX4 and SIX5. Tyrosine phosphatase that dephosphorylates 'Tyr-142' of histone H2AX (H2AXY142ph) and promotes efficient DNA repair via the recruitment of DNA repair complexes containing MDC1. 'Tyr-142' phosphorylation of histone H2AX plays a central role in DNA repair and acts as a mark that distinguishes between apoptotic and repair responses to genotoxic stress. Its function as histone phosphatase may contribute to its function in transcription regulation during organogenesis. Also has phosphatase activity with proteins phosphorylated on Ser and Thr residues (in vitro). Required for normal embryonic development of the craniofacial and trunk skeleton, kidneys and ears. Together with SIX1, it plays an important role in hypaxial muscle development; in this it is functionally redundant with EYA2. This is Protein phosphatase EYA1 (Eya1) from Mus musculus (Mouse).